We begin with the raw amino-acid sequence, 429 residues long: Ribosomal RNA small subunit methyltransferase B (429 aa).

Residues 254-260 (CAAPGGK), aspartate 277, aspartate 303, and aspartate 322 each bind S-adenosyl-L-methionine. Cysteine 375 functions as the Nucleophile in the catalytic mechanism.

Belongs to the class I-like SAM-binding methyltransferase superfamily. RsmB/NOP family.

The protein resides in the cytoplasm. The catalysed reaction is cytidine(967) in 16S rRNA + S-adenosyl-L-methionine = 5-methylcytidine(967) in 16S rRNA + S-adenosyl-L-homocysteine + H(+). Specifically methylates the cytosine at position 967 (m5C967) of 16S rRNA. The sequence is that of Ribosomal RNA small subunit methyltransferase B from Escherichia coli (strain SE11).